The sequence spans 161 residues: ATP synthase subunit b (161 aa).

A helical transmembrane segment spans residues 10–29; the sequence is SVIQLMSFFLLLYILKKFLY.

The protein belongs to the ATPase B chain family. F-type ATPases have 2 components, F(1) - the catalytic core - and F(0) - the membrane proton channel. F(1) has five subunits: alpha(3), beta(3), gamma(1), delta(1), epsilon(1). F(0) has three main subunits: a(1), b(2) and c(10-14). The alpha and beta chains form an alternating ring which encloses part of the gamma chain. F(1) is attached to F(0) by a central stalk formed by the gamma and epsilon chains, while a peripheral stalk is formed by the delta and b chains.

Its subcellular location is the cell inner membrane. Its function is as follows. F(1)F(0) ATP synthase produces ATP from ADP in the presence of a proton or sodium gradient. F-type ATPases consist of two structural domains, F(1) containing the extramembraneous catalytic core and F(0) containing the membrane proton channel, linked together by a central stalk and a peripheral stalk. During catalysis, ATP synthesis in the catalytic domain of F(1) is coupled via a rotary mechanism of the central stalk subunits to proton translocation. Component of the F(0) channel, it forms part of the peripheral stalk, linking F(1) to F(0). In Thermosipho melanesiensis (strain DSM 12029 / CIP 104789 / BI429), this protein is ATP synthase subunit b.